A 484-amino-acid chain; its full sequence is Putative sodium/proton-dependent alanine carrier protein YrbD (484 aa).

11 helical membrane passes run 11–31, 66–88, 92–114, 139–159, 172–192, 205–225, 238–258, 292–312, 350–370, 390–410, and 416–436; these read VLWS…FSIM, ALSG…FGGP, FWMW…LAQI, WFAV…MPGV, FGIS…FIIF, IVPF…VMNV, SAFA…SWGV, AFSV…MILF, GFGA…TIMA, WAML…TVKT, and ALGD…IVLL.

The protein belongs to the alanine or glycine:cation symporter (AGCS) (TC 2.A.25) family.

The protein resides in the cell membrane. In Bacillus subtilis (strain 168), this protein is Putative sodium/proton-dependent alanine carrier protein YrbD (yrbD).